Consider the following 299-residue polypeptide: Diaminopimelate epimerase (299 aa).

Substrate is bound by residues asparagine 11 and asparagine 63. Catalysis depends on cysteine 72, which acts as the Proton donor. Substrate-binding positions include 73-74, asparagine 211, and 229-230; these read GN and ER. Residue cysteine 238 is the Proton acceptor of the active site. 239–240 serves as a coordination point for substrate; sequence GT.

The protein belongs to the diaminopimelate epimerase family. In terms of assembly, homodimer.

The protein resides in the cytoplasm. The enzyme catalyses (2S,6S)-2,6-diaminopimelate = meso-2,6-diaminopimelate. It functions in the pathway amino-acid biosynthesis; L-lysine biosynthesis via DAP pathway; DL-2,6-diaminopimelate from LL-2,6-diaminopimelate: step 1/1. Its function is as follows. Catalyzes the stereoinversion of LL-2,6-diaminopimelate (L,L-DAP) to meso-diaminopimelate (meso-DAP), a precursor of L-lysine and an essential component of the bacterial peptidoglycan. In Natranaerobius thermophilus (strain ATCC BAA-1301 / DSM 18059 / JW/NM-WN-LF), this protein is Diaminopimelate epimerase.